We begin with the raw amino-acid sequence, 902 residues long: U3 small nucleolar RNA-associated protein 21 homolog (902 aa).

WD repeat units follow at residues 40 to 71 (DIEA…LLFV), 80 to 110 (TCLK…WDID), 119 to 154 (THLD…LHTT), 164 to 198 (TSLL…RVHE), 206 to 243 (GITS…MEFK), 249 to 284 (LSCS…QNVT), 289 to 332 (FGSL…RSRN), 339 to 373 (SFVK…QSTE), 399 to 438 (TALS…GQHV), 447 to 481 (VRSV…KRKS), 492 to 528 (VTAV…DSLD), 533 to 568 (ITHA…VREL), 570 to 611 (GHSN…DSIS), and 613 to 651 (PSVC…KHVS).

In terms of assembly, interacts with snoRNA U3. Interacts with MPP10. Component of the ribosomal small subunit (SSU) processome composed of at least 40 protein subunits and snoRNA U3.

Its subcellular location is the nucleus. It localises to the nucleolus. In terms of biological role, involved in nucleolar processing of pre-18S ribosomal RNA and ribosome assembly. The protein is U3 small nucleolar RNA-associated protein 21 homolog of Schizosaccharomyces pombe (strain 972 / ATCC 24843) (Fission yeast).